The primary structure comprises 443 residues: tRNA-2-methylthio-N(6)-dimethylallyladenosine synthase (443 aa).

The MTTase N-terminal domain maps to 12–126; sequence KTFRVKSFGC…LPEMVADAAA (115 aa). Residues Cys-21, Cys-57, Cys-89, Cys-162, Cys-166, and Cys-169 each coordinate [4Fe-4S] cluster. The 233-residue stretch at 148–380 folds into the Radical SAM core domain; the sequence is RKSAPTAFLT…QAALNRDQLA (233 aa). The TRAM domain maps to 383–443; that stretch reads KASVGKTCEV…GPNSISGRLA (61 aa).

Belongs to the methylthiotransferase family. MiaB subfamily. As to quaternary structure, monomer. The cofactor is [4Fe-4S] cluster.

It is found in the cytoplasm. It carries out the reaction N(6)-dimethylallyladenosine(37) in tRNA + (sulfur carrier)-SH + AH2 + 2 S-adenosyl-L-methionine = 2-methylsulfanyl-N(6)-dimethylallyladenosine(37) in tRNA + (sulfur carrier)-H + 5'-deoxyadenosine + L-methionine + A + S-adenosyl-L-homocysteine + 2 H(+). Its function is as follows. Catalyzes the methylthiolation of N6-(dimethylallyl)adenosine (i(6)A), leading to the formation of 2-methylthio-N6-(dimethylallyl)adenosine (ms(2)i(6)A) at position 37 in tRNAs that read codons beginning with uridine. The sequence is that of tRNA-2-methylthio-N(6)-dimethylallyladenosine synthase from Novosphingobium aromaticivorans (strain ATCC 700278 / DSM 12444 / CCUG 56034 / CIP 105152 / NBRC 16084 / F199).